Here is a 152-residue protein sequence, read N- to C-terminus: Large ribosomal subunit protein uL15 (152 aa).

The interval 1-79 (MRLNELSPPP…GRHTPAHPKV (79 aa)) is disordered. The segment covering 22-35 (GEGSGYGKTSGRGQ) has biased composition (gly residues).

It belongs to the universal ribosomal protein uL15 family. Part of the 50S ribosomal subunit.

In terms of biological role, binds to the 23S rRNA. This Rubrobacter xylanophilus (strain DSM 9941 / JCM 11954 / NBRC 16129 / PRD-1) protein is Large ribosomal subunit protein uL15.